Reading from the N-terminus, the 804-residue chain is Leucine--tRNA ligase (804 aa).

The short motif at 40–51 (PYPSGAGLHVGH) is the 'HIGH' region element. The 'KMSKS' region signature appears at 576–580 (KMSKS). Lys579 contacts ATP.

This sequence belongs to the class-I aminoacyl-tRNA synthetase family.

The protein resides in the cytoplasm. It carries out the reaction tRNA(Leu) + L-leucine + ATP = L-leucyl-tRNA(Leu) + AMP + diphosphate. This is Leucine--tRNA ligase from Bacillus pumilus (strain SAFR-032).